The sequence spans 321 residues: Glucokinase (321 aa).

Position 8–13 (8–13 (GDVGGT)) interacts with ATP.

Belongs to the bacterial glucokinase family.

The protein localises to the cytoplasm. It carries out the reaction D-glucose + ATP = D-glucose 6-phosphate + ADP + H(+). The chain is Glucokinase from Salmonella agona (strain SL483).